The following is a 122-amino-acid chain: Large ribosomal subunit protein uL14 (122 aa).

The protein belongs to the universal ribosomal protein uL14 family. Part of the 50S ribosomal subunit. Forms a cluster with proteins L3 and L19. In the 70S ribosome, L14 and L19 interact and together make contacts with the 16S rRNA in bridges B5 and B8.

Its function is as follows. Binds to 23S rRNA. Forms part of two intersubunit bridges in the 70S ribosome. This Lactococcus lactis subsp. lactis (strain IL1403) (Streptococcus lactis) protein is Large ribosomal subunit protein uL14.